We begin with the raw amino-acid sequence, 277 residues long: F420-dependent methylenetetrahydromethanopterin dehydrogenase (277 aa).

This sequence belongs to the MTD family.

It catalyses the reaction 5,10-methylenetetrahydromethanopterin + oxidized coenzyme F420-(gamma-L-Glu)(n) + 2 H(+) = 5,10-methenyl-5,6,7,8-tetrahydromethanopterin + reduced coenzyme F420-(gamma-L-Glu)(n). The protein operates within one-carbon metabolism; methanogenesis from CO(2); 5,10-methylene-5,6,7,8-tetrahydromethanopterin from 5,10-methenyl-5,6,7,8-tetrahydromethanopterin (coenzyme F420 route): step 1/1. Its function is as follows. Catalyzes the reversible reduction of methenyl-H(4)MPT(+) to methylene-H(4)MPT. This Methanococcus maripaludis (strain DSM 14266 / JCM 13030 / NBRC 101832 / S2 / LL) protein is F420-dependent methylenetetrahydromethanopterin dehydrogenase.